Here is a 133-residue protein sequence, read N- to C-terminus: Profilin (133 aa).

Belongs to the profilin family. Occurs in many kinds of cells as a complex with monomeric actin in a 1:1 ratio.

Its subcellular location is the cytoplasm. The protein resides in the cytoskeleton. In terms of biological role, binds to actin and affects the structure of the cytoskeleton. At high concentrations, profilin prevents the polymerization of actin, whereas it enhances it at low concentrations. By binding to PIP2, it inhibits the formation of IP3 and DG. The protein is Profilin of Mercurialis annua (Annual mercury).